Reading from the N-terminus, the 344-residue chain is tRNA-specific 2-thiouridylase MnmA (344 aa).

Residues 9–16 and Met-34 contribute to the ATP site; that span reads AMSGGVDS. Catalysis depends on Cys-92, which acts as the Nucleophile. Cysteines 92 and 188 form a disulfide. Residue Gly-116 participates in ATP binding. Residues 138-140 form an interaction with tRNA region; it reads KDQ. The active-site Cysteine persulfide intermediate is Cys-188.

The protein belongs to the MnmA/TRMU family.

Its subcellular location is the cytoplasm. The enzyme catalyses S-sulfanyl-L-cysteinyl-[protein] + uridine(34) in tRNA + AH2 + ATP = 2-thiouridine(34) in tRNA + L-cysteinyl-[protein] + A + AMP + diphosphate + H(+). Functionally, catalyzes the 2-thiolation of uridine at the wobble position (U34) of tRNA, leading to the formation of s(2)U34. This is tRNA-specific 2-thiouridylase MnmA from Desulfotalea psychrophila (strain LSv54 / DSM 12343).